The sequence spans 217 residues: Peptide methionine sulfoxide reductase MsrA (217 aa).

Cys-56 is an active-site residue.

This sequence belongs to the MsrA Met sulfoxide reductase family.

It catalyses the reaction L-methionyl-[protein] + [thioredoxin]-disulfide + H2O = L-methionyl-(S)-S-oxide-[protein] + [thioredoxin]-dithiol. The enzyme catalyses [thioredoxin]-disulfide + L-methionine + H2O = L-methionine (S)-S-oxide + [thioredoxin]-dithiol. Functionally, has an important function as a repair enzyme for proteins that have been inactivated by oxidation. Catalyzes the reversible oxidation-reduction of methionine sulfoxide in proteins to methionine. This Corynebacterium glutamicum (strain R) protein is Peptide methionine sulfoxide reductase MsrA.